We begin with the raw amino-acid sequence, 393 residues long: Formate-dependent phosphoribosylglycinamide formyltransferase (393 aa).

N(1)-(5-phospho-beta-D-ribosyl)glycinamide is bound by residues glutamate 22–leucine 23 and glutamate 82. Residues arginine 114, lysine 155, serine 160–glutamine 165, glutamate 195–isoleucine 198, and glutamate 203 contribute to the ATP site. The ATP-grasp domain maps to arginine 119–leucine 308. Mg(2+) is bound by residues glutamate 267 and glutamate 279. N(1)-(5-phospho-beta-D-ribosyl)glycinamide is bound by residues aspartate 286, lysine 356, and arginine 363–arginine 364.

Belongs to the PurK/PurT family. In terms of assembly, homodimer.

It carries out the reaction N(1)-(5-phospho-beta-D-ribosyl)glycinamide + formate + ATP = N(2)-formyl-N(1)-(5-phospho-beta-D-ribosyl)glycinamide + ADP + phosphate + H(+). It participates in purine metabolism; IMP biosynthesis via de novo pathway; N(2)-formyl-N(1)-(5-phospho-D-ribosyl)glycinamide from N(1)-(5-phospho-D-ribosyl)glycinamide (formate route): step 1/1. Its function is as follows. Involved in the de novo purine biosynthesis. Catalyzes the transfer of formate to 5-phospho-ribosyl-glycinamide (GAR), producing 5-phospho-ribosyl-N-formylglycinamide (FGAR). Formate is provided by PurU via hydrolysis of 10-formyl-tetrahydrofolate. The sequence is that of Formate-dependent phosphoribosylglycinamide formyltransferase from Actinobacillus pleuropneumoniae serotype 3 (strain JL03).